Consider the following 88-residue polypeptide: Mini zinc finger protein 3 (88 aa).

The ZF-HD dimerization-type; degenerate zinc-finger motif lies at 26–72 (YVECQKNHAANIGGYAVDGCREFMASGGDDALTCAACGCHRNFHRRE).

As to quaternary structure, homo- and heterodimers. Interacts with ZHD3, ZHD5, ZHD6, ZHD7, ZHD8, ZHD9, ZHD10 and ZHD13. In terms of tissue distribution, mostly expressed in roots, stems and flowers, present in seedlings and leaves, and weakly observed in inflorescence and siliques.

Its subcellular location is the cytoplasm. Its function is as follows. Inhibits zinc finger homeodomain (ZHD) transcription factors by interacting with them to prevent both their nuclear localization and their DNA-binding properties. Involved in integrating signals from multiple hormones by regulating the expression of specific genes. Promotes the formation of ectopic shoot meristems on leaf margins. The protein is Mini zinc finger protein 3 (MIF3) of Arabidopsis thaliana (Mouse-ear cress).